We begin with the raw amino-acid sequence, 189 residues long: UPF0398 protein LCK_00599 (189 aa).

Belongs to the UPF0398 family.

The sequence is that of UPF0398 protein LCK_00599 from Leuconostoc citreum (strain KM20).